Consider the following 261-residue polypeptide: Phosphate import ATP-binding protein PstB 1 (261 aa).

Residues 8 to 256 (IKVNNLSFYY…PHDSRTREYV (249 aa)) enclose the ABC transporter domain. 40–47 (GPSGCGKS) serves as a coordination point for ATP.

Belongs to the ABC transporter superfamily. Phosphate importer (TC 3.A.1.7) family. The complex is composed of two ATP-binding proteins (PstB), two transmembrane proteins (PstC and PstA) and a solute-binding protein (PstS).

It localises to the cell inner membrane. It carries out the reaction phosphate(out) + ATP + H2O = ADP + 2 phosphate(in) + H(+). Functionally, part of the ABC transporter complex PstSACB involved in phosphate import. Responsible for energy coupling to the transport system. The protein is Phosphate import ATP-binding protein PstB 1 of Nostoc sp. (strain PCC 7120 / SAG 25.82 / UTEX 2576).